Here is a 400-residue protein sequence, read N- to C-terminus: S-adenosylmethionine synthase (400 aa).

An ATP-binding site is contributed by histidine 17. Aspartate 19 lines the Mg(2+) pocket. Glutamate 45 is a binding site for K(+). Positions 58 and 101 each coordinate L-methionine. Positions 101-111 (QSPDIAMGVDQ) are flexible loop. ATP-binding positions include 177 to 179 (DGK), 244 to 245 (RF), aspartate 253, 259 to 260 (RK), alanine 276, and lysine 280. An L-methionine-binding site is contributed by aspartate 253. Lysine 284 is a binding site for L-methionine.

This sequence belongs to the AdoMet synthase family. In terms of assembly, homotetramer; dimer of dimers. The cofactor is Mg(2+). It depends on K(+) as a cofactor.

The protein resides in the cytoplasm. It catalyses the reaction L-methionine + ATP + H2O = S-adenosyl-L-methionine + phosphate + diphosphate. It participates in amino-acid biosynthesis; S-adenosyl-L-methionine biosynthesis; S-adenosyl-L-methionine from L-methionine: step 1/1. Its function is as follows. Catalyzes the formation of S-adenosylmethionine (AdoMet) from methionine and ATP. The overall synthetic reaction is composed of two sequential steps, AdoMet formation and the subsequent tripolyphosphate hydrolysis which occurs prior to release of AdoMet from the enzyme. This chain is S-adenosylmethionine synthase, found in Bacillus licheniformis (strain ATCC 14580 / DSM 13 / JCM 2505 / CCUG 7422 / NBRC 12200 / NCIMB 9375 / NCTC 10341 / NRRL NRS-1264 / Gibson 46).